Consider the following 297-residue polypeptide: Phosphatidylglycerol--prolipoprotein diacylglyceryl transferase (297 aa).

4 helical membrane-spanning segments follow: residues 20–40, 57–77, 105–125, and 133–153; these read FITI…GLFV, EILP…YVIF, AVWE…ISII, and INLK…QSIG. R154 is a binding site for a 1,2-diacyl-sn-glycero-3-phospho-(1'-sn-glycerol). The next 3 helical transmembrane spans lie at 193 to 213, 225 to 245, and 266 to 286; these read PTFL…IIIF, GFIS…IEGL, and AQFI…FLRL.

The protein belongs to the Lgt family.

The protein localises to the cell inner membrane. The catalysed reaction is L-cysteinyl-[prolipoprotein] + a 1,2-diacyl-sn-glycero-3-phospho-(1'-sn-glycerol) = an S-1,2-diacyl-sn-glyceryl-L-cysteinyl-[prolipoprotein] + sn-glycerol 1-phosphate + H(+). It functions in the pathway protein modification; lipoprotein biosynthesis (diacylglyceryl transfer). Functionally, catalyzes the transfer of the diacylglyceryl group from phosphatidylglycerol to the sulfhydryl group of the N-terminal cysteine of a prolipoprotein, the first step in the formation of mature lipoproteins. This Prochlorococcus marinus (strain MIT 9215) protein is Phosphatidylglycerol--prolipoprotein diacylglyceryl transferase.